A 1300-amino-acid polypeptide reads, in one-letter code: MADATTSRIDFSKIKSIINSPDLLKVQLDSFHNFIQDSVPLAKRKDQGLERVLRGAFPITDTRGLYLLEYISYAFDKPKYTVEECIERGLTYDVSLKVKLKLSYKDEADEPDWKETIQQEVYLGRIPYMTERGTFIVNGAERVVVAQLHRSPGVVFSEAVHPNGKKMFSAKIVPTRGSWIEFQTDINNQIFVYIDQKKNFLVTALLRAIGFARDEDILALFDLVEEVSLKASKREQLVGQYLASDIVDMQTGEVISARTAITEEIFEQILLAGYKSIKVMKSFSNNEKGMDKSVIINTILNDSSATEEEALEIVYEELRANEAPDIEAARSFLERTFFNQKKYDLGDVGRYRIKKKLRREFEELYSFIGEKPELKALSDTIEEKILQTIQTYSDEPIGEDILVLTHYDIIAVIYYLIKLVNGQAEVDDVDHLANRRVRSVGEQLAAQFVVGLARMGKNVREKLNSRDSDKIAPSDLINARTVSSVVSSFFATSQLSQFMDQTNPLAEMTNKRRVSALGPGGLTRERAGFEVRDVHYTHYGRLCPIETPEGPNIGLISSLSVYAEINDKGFIQTPYRLVDNGQVTDTVVMLSAEDEENKITVPVSIPLDENNRIAVETVQARTKGDYPVVAATDVHYMDVSPVQIVSAAAALIPFLEHDDGNRALMGANMQRQAVPLLTSDAPVVGTGMEGKVARDSRAVIVAEGPGEVVDVTADYIQVRYQLDADNNLRLSMLDPDEGLKTYKLIKFKRSNQDTCISQKPLVRIGDKVEKNTVLADSSSTEYGELALGKNVLVAFMPWRGYNFEDAIILSERLVYDDVFTSIHIHEFEANVRDTKRGEEQFTRDIYNVSEEALRNLDENGIVRCGAEVKERDILVGKITPKGESDPTPEEKLLRAIFGDKSSDVKDASMHVPAGMKGIIIKTKLFSRKKKIGLDIKEKIELLDKQFAAKEYDLRKRFAKWLKHFLDGKTSTGVYNDKGKVVVPEGTVFEESVLAKFATAQFLESVDLSRGVVSSDKTNKNVTRLIKEFRFLLKDIADERENEKYKVNVGDELPPGIEELAKVYIAQKRKIQVGDKMAGRHGNKGVVGKILPVEDMPFMADGTPVDIVLNPLGVPSRMNIGQLYETSLGWAAKKLGVKFKTPIFNGATYEEVQRELERAGLPTHGKVSLFDGRTGERFDDEVTVGYIYMLKLSHLVDDKIHARSTGPYSLITQQPLGGKAQFGGQRFGEMEVWALEAYGASNILREMLTVKSDDVVGRNKTYEAIVKGQNLPEPGIPESFNVLVRELQGLGLEIRIDDKVP.

This sequence belongs to the RNA polymerase beta chain family. In terms of assembly, the RNAP catalytic core consists of 2 alpha, 1 beta, 1 beta' and 1 omega subunit. When a sigma factor is associated with the core the holoenzyme is formed, which can initiate transcription.

The enzyme catalyses RNA(n) + a ribonucleoside 5'-triphosphate = RNA(n+1) + diphosphate. In terms of biological role, DNA-dependent RNA polymerase catalyzes the transcription of DNA into RNA using the four ribonucleoside triphosphates as substrates. In Chlorobium chlorochromatii (strain CaD3), this protein is DNA-directed RNA polymerase subunit beta.